A 390-amino-acid chain; its full sequence is 5-hydroxytryptamine receptor 1B (390 aa).

A disordered region spans residues 1–21; sequence MEETGAQCAPPPPAGSQTGVS. Over 1 to 46 the chain is Extracellular; it reads MEETGAQCAPPPPAGSQTGVSQVNLSAAPSHNCSTEGYVYQDSVAL. N-linked (GlcNAc...) asparagine glycans are attached at residues N24 and N32. Residues 47–72 form a helical membrane-spanning segment; that stretch reads PWKVLLVVLLALITLATTLSNAFVIA. At 73-86 the chain is on the cytoplasmic side; that stretch reads TVYRTRKLHTPANY. A helical membrane pass occupies residues 87–111; it reads LIASLAVTDLLVSILVMPISTMYVV. Topologically, residues 112–119 are extracellular; sequence TGRWTLGQ. The helical transmembrane segment at 120–145 threads the bilayer; that stretch reads VVCDFWLSSDITCCTASILHLCVIAL. An intrachain disulfide couples C122 to C199. Ergotamine-binding residues include D129 and T134. Residues 146–148 carry the DRY motif; important for ligand-induced conformation changes and signaling motif; it reads DRY. At 146–165 the chain is on the cytoplasmic side; the sequence is DRYWAITDAVEYSAKRTPKR. A helical transmembrane segment spans residues 166–184; sequence AAVMIALVWVFSISISLPP. At 185-205 the chain is on the extracellular side; it reads FFWRQAKAEEEVLDCLVNTDH. Ergotamine is bound at residue V201. A helical membrane pass occupies residues 206–229; that stretch reads ILYTVYSTVGAFYFPTLLLIALYS. Residues 230-315 are Cytoplasmic-facing; that stretch reads RIYVEARSRI…AARERKATKT (86 aa). The interval 251–282 is disordered; the sequence is LTRAQLMTDSPGSTSSVTSINSRAPDVPSESG. Residues 255-272 show a composition bias toward polar residues; sequence QLMTDSPGSTSSVTSINS. Residues 316 to 337 form a helical membrane-spanning segment; that stretch reads LGIILGAFIVCWLPFFIISLVM. Over 338 to 347 the chain is Extracellular; the sequence is PICKDACWFH. A helical membrane pass occupies residues 348–370; that stretch reads LAIFDFFTWLGYLNSLINPIIYT. The short motif at 365–369 is the NPxxY motif; important for ligand-induced conformation changes and signaling element; that stretch reads NPIIY. Residues 371 to 390 are Cytoplasmic-facing; sequence MSNEDFKQAFHKLIRFKCAS. C388 carries the S-palmitoyl cysteine lipid modification.

This sequence belongs to the G-protein coupled receptor 1 family. In terms of assembly, homodimer. Heterodimer with HTR1D. In terms of processing, phosphorylated. Desensitization of the receptor may be mediated by its phosphorylation. Post-translationally, palmitoylated.

It is found in the cell membrane. In terms of biological role, G-protein coupled receptor for 5-hydroxytryptamine (serotonin). Also functions as a receptor for ergot alkaloid derivatives, various anxiolytic and antidepressant drugs and other psychoactive substances, such as lysergic acid diethylamide (LSD). Ligand binding causes a conformation change that triggers signaling via guanine nucleotide-binding proteins (G proteins) and modulates the activity of downstream effectors, such as adenylate cyclase. HTR1B is coupled to G(i)/G(o) G alpha proteins and mediates inhibitory neurotransmission by inhibiting adenylate cyclase activity. Arrestin family members inhibit signaling via G proteins and mediate activation of alternative signaling pathways. Regulates the release of 5-hydroxytryptamine, dopamine and acetylcholine in the brain, and thereby affects neural activity, nociceptive processing, pain perception, mood and behavior. Besides, plays a role in vasoconstriction of cerebral arteries. The protein is 5-hydroxytryptamine receptor 1B (HTR1B) of Equus caballus (Horse).